Reading from the N-terminus, the 108-residue chain is Protein YcgL (108 aa).

In terms of domain architecture, YcgL spans 12–96 (MFCVIYRSSK…PPEDLLKQHL (85 aa)).

The chain is Protein YcgL from Escherichia coli O17:K52:H18 (strain UMN026 / ExPEC).